We begin with the raw amino-acid sequence, 202 residues long: LexA repressor (202 aa).

Positions 28 to 48 (RAEIAQRLGFRSPNAAEEHLK) form a DNA-binding region, H-T-H motif. Residues Ser-119 and Lys-156 each act as for autocatalytic cleavage activity in the active site.

This sequence belongs to the peptidase S24 family. Homodimer.

The enzyme catalyses Hydrolysis of Ala-|-Gly bond in repressor LexA.. Functionally, represses a number of genes involved in the response to DNA damage (SOS response), including recA and lexA. Binds to the 16 bp palindromic sequence 5'-CTGTATATATATACAG-3'. In the presence of single-stranded DNA, RecA interacts with LexA causing an autocatalytic cleavage which disrupts the DNA-binding part of LexA, leading to derepression of the SOS regulon and eventually DNA repair. In Klebsiella pneumoniae (strain 342), this protein is LexA repressor.